A 67-amino-acid polypeptide reads, in one-letter code: Small ribosomal subunit protein bS21 (67 aa).

Belongs to the bacterial ribosomal protein bS21 family.

The protein is Small ribosomal subunit protein bS21 of Oleidesulfovibrio alaskensis (strain ATCC BAA-1058 / DSM 17464 / G20) (Desulfovibrio alaskensis).